Reading from the N-terminus, the 201-residue chain is uncharacterized protein (201 aa).

A disordered region spans residues 1-22 (MAASKAAKSSEDRAGGGGGGGG).

This is an uncharacterized protein from Tomato ringspot virus (isolate raspberry) (ToRSV).